The following is a 276-amino-acid chain: Formamidopyrimidine-DNA glycosylase (276 aa).

Residue P2 is the Schiff-base intermediate with DNA of the active site. Catalysis depends on E3, which acts as the Proton donor. K59 acts as the Proton donor; for beta-elimination activity in catalysis. Positions 93, 112, and 155 each coordinate DNA. The segment at 240-274 (QVYNREGKPCPRCGDKIAKKKVGGRSSYYCPTCQK) adopts an FPG-type zinc-finger fold. The active-site Proton donor; for delta-elimination activity is the R264.

It belongs to the FPG family. Monomer. It depends on Zn(2+) as a cofactor.

It catalyses the reaction Hydrolysis of DNA containing ring-opened 7-methylguanine residues, releasing 2,6-diamino-4-hydroxy-5-(N-methyl)formamidopyrimidine.. The catalysed reaction is 2'-deoxyribonucleotide-(2'-deoxyribose 5'-phosphate)-2'-deoxyribonucleotide-DNA = a 3'-end 2'-deoxyribonucleotide-(2,3-dehydro-2,3-deoxyribose 5'-phosphate)-DNA + a 5'-end 5'-phospho-2'-deoxyribonucleoside-DNA + H(+). In terms of biological role, involved in base excision repair of DNA damaged by oxidation or by mutagenic agents. Acts as a DNA glycosylase that recognizes and removes damaged bases. Has a preference for oxidized purines, such as 7,8-dihydro-8-oxoguanine (8-oxoG). Has AP (apurinic/apyrimidinic) lyase activity and introduces nicks in the DNA strand. Cleaves the DNA backbone by beta-delta elimination to generate a single-strand break at the site of the removed base with both 3'- and 5'-phosphates. This is Formamidopyrimidine-DNA glycosylase from Pelotomaculum thermopropionicum (strain DSM 13744 / JCM 10971 / SI).